The chain runs to 136 residues: Small ribosomal subunit protein eS17B (136 aa).

Belongs to the eukaryotic ribosomal protein eS17 family. As to quaternary structure, component of the small ribosomal subunit (SSU). Mature yeast ribosomes consist of a small (40S) and a large (60S) subunit. The 40S small subunit contains 1 molecule of ribosomal RNA (18S rRNA) and 33 different proteins (encoded by 57 genes). The large 60S subunit contains 3 rRNA molecules (25S, 5.8S and 5S rRNA) and 46 different proteins (encoded by 81 genes).

The protein localises to the cytoplasm. Component of the ribosome, a large ribonucleoprotein complex responsible for the synthesis of proteins in the cell. The small ribosomal subunit (SSU) binds messenger RNAs (mRNAs) and translates the encoded message by selecting cognate aminoacyl-transfer RNA (tRNA) molecules. The large subunit (LSU) contains the ribosomal catalytic site termed the peptidyl transferase center (PTC), which catalyzes the formation of peptide bonds, thereby polymerizing the amino acids delivered by tRNAs into a polypeptide chain. The nascent polypeptides leave the ribosome through a tunnel in the LSU and interact with protein factors that function in enzymatic processing, targeting, and the membrane insertion of nascent chains at the exit of the ribosomal tunnel. This is Small ribosomal subunit protein eS17B from Saccharomyces cerevisiae (strain ATCC 204508 / S288c) (Baker's yeast).